Consider the following 435-residue polypeptide: MSHEGQEELLDYSDSEEIAVPTTTAPSAAAGEGANDKEADKKGSYVGIHATGFRDFLLKPELLRAIGDCGFEHPSEVQQVCIPQSILGTDVLCQAKSGLGKTAVFVLSTLQQLDPVPGEISTLVICHTRELAYQIRNEYARFSKYMPDVKTEVFYGGTPITRDLEKLKNKDTCPHIVVATPGRLHALVTEKSIRLNNIKSFVIDECDKVLEAVDMRRDVQDIFRNTPHQKQVMMFSATLSQEIRPVCKKFMQNPLEIYVDDEAKLTLHGLQQYYIKLDEKEKNRKLSDLLDSLEFNQVIIFVRSTQRANELNKLLCSSNFPSIAVHSGLPQEERIERYKSFKEFNKRICVSTDVFGRGIDIERINLAINYDLPNEADQYLHRVGRAGRFGTKGLAVSLVSTKDDEEVLEKIQSRFDVKITEFPEEGVDPSTYMNT.

The interval 1–40 (MSHEGQEELLDYSDSEEIAVPTTTAPSAAAGEGANDKEAD) is disordered. Acidic residues predominate over residues 7-17 (EELLDYSDSEE). The segment covering 19-33 (AVPTTTAPSAAAGEG) has biased composition (low complexity). Residues 51-79 (TGFRDFLLKPELLRAIGDCGFEHPSEVQQ) carry the Q motif motif. The region spanning 82–257 (IPQSILGTDV…KKFMQNPLEI (176 aa)) is the Helicase ATP-binding domain. 95–102 (AKSGLGKT) provides a ligand contact to ATP. The DECD box motif lies at 204-207 (DECD). Residues 269–430 (GLQQYYIKLD…EFPEEGVDPS (162 aa)) form the Helicase C-terminal domain.

Belongs to the DEAD box helicase family. DECD subfamily.

The protein resides in the nucleus. The enzyme catalyses ATP + H2O = ADP + phosphate + H(+). In terms of biological role, ATP-binding RNA helicase involved in transcription elongation and required for the export of mRNA out of the nucleus. SUB2 also plays a role in pre-mRNA splicing and spliceosome assembly. May be involved in rDNA and telomeric silencing, and maintenance of genome integrity. The polypeptide is ATP-dependent RNA helicase SUB2 (SUB2) (Debaryomyces hansenii (strain ATCC 36239 / CBS 767 / BCRC 21394 / JCM 1990 / NBRC 0083 / IGC 2968) (Yeast)).